The chain runs to 207 residues: LexA repressor (207 aa).

A DNA-binding region (H-T-H motif) is located at residues 28 to 48 (VREIGEAVGLASSSTVHGHLS). Catalysis depends on for autocatalytic cleavage activity residues serine 130 and lysine 168.

The protein belongs to the peptidase S24 family. In terms of assembly, homodimer.

It catalyses the reaction Hydrolysis of Ala-|-Gly bond in repressor LexA.. Represses a number of genes involved in the response to DNA damage (SOS response), including recA and lexA. In the presence of single-stranded DNA, RecA interacts with LexA causing an autocatalytic cleavage which disrupts the DNA-binding part of LexA, leading to derepression of the SOS regulon and eventually DNA repair. The chain is LexA repressor from Staphylococcus aureus (strain MSSA476).